Reading from the N-terminus, the 569-residue chain is Potassium-transporting ATPase potassium-binding subunit (569 aa).

Transmembrane regions (helical) follow at residues 3–23, 68–88, 136–156, 179–199, 259–279, 284–304, 384–404, 422–442, 490–510, and 534–554; these read LMEYTQLALFLGLLALMSPVL, AASLCAFSAAGFLMTFGVLML, VGLAYHNFVSAAAGLAVAVAV, VLYVLLPISLVLAVVLVGQGV, LQMLAIFIIPSSLVFTLGGAV, HAWTVWFVMACLFMVGACSLY, GLYGMVLFILLTVFLAGLMVG, AMLALIIAATPPLLFSAVAAV, IALAMLIGRFGIMLPMLGVAG, and LLLTLVIVIVGALTYLPALAL.

Belongs to the KdpA family. As to quaternary structure, the system is composed of three essential subunits: KdpA, KdpB and KdpC.

The protein resides in the cell inner membrane. In terms of biological role, part of the high-affinity ATP-driven potassium transport (or Kdp) system, which catalyzes the hydrolysis of ATP coupled with the electrogenic transport of potassium into the cytoplasm. This subunit binds the periplasmic potassium ions and delivers the ions to the membrane domain of KdpB through an intramembrane tunnel. The sequence is that of Potassium-transporting ATPase potassium-binding subunit from Nitratidesulfovibrio vulgaris (strain ATCC 29579 / DSM 644 / CCUG 34227 / NCIMB 8303 / VKM B-1760 / Hildenborough) (Desulfovibrio vulgaris).